Consider the following 508-residue polypeptide: UDP-N-acetylmuramyl-tripeptide synthetase (508 aa).

Serine 35 contributes to the UDP-N-acetyl-alpha-D-muramoyl-L-alanyl-D-glutamate binding site. 118 to 124 (GTDGKSS) is a binding site for ATP. Residues 163-164 (ST), threonine 190, and arginine 200 contribute to the UDP-N-acetyl-alpha-D-muramoyl-L-alanyl-D-glutamate site. At lysine 232 the chain carries N6-carboxylysine.

It belongs to the MurCDEF family. MurE subfamily. Carboxylation is probably crucial for Mg(2+) binding and, consequently, for the gamma-phosphate positioning of ATP.

The protein resides in the cytoplasm. Its pathway is cell wall biogenesis; peptidoglycan biosynthesis. Functionally, catalyzes the addition of an amino acid to the nucleotide precursor UDP-N-acetylmuramoyl-L-alanyl-D-glutamate (UMAG) in the biosynthesis of bacterial cell-wall peptidoglycan. This Borreliella burgdorferi (strain ATCC 35210 / DSM 4680 / CIP 102532 / B31) (Borrelia burgdorferi) protein is UDP-N-acetylmuramyl-tripeptide synthetase.